We begin with the raw amino-acid sequence, 188 residues long: Acireductone dioxygenase (188 aa).

Residues His-97, His-99, Glu-103, and His-141 each coordinate Fe(2+). His-97, His-99, Glu-103, and His-141 together coordinate Ni(2+).

It belongs to the acireductone dioxygenase (ARD) family. As to quaternary structure, monomer. Fe(2+) is required as a cofactor. It depends on Ni(2+) as a cofactor.

It carries out the reaction 1,2-dihydroxy-5-(methylsulfanyl)pent-1-en-3-one + O2 = 3-(methylsulfanyl)propanoate + CO + formate + 2 H(+). The catalysed reaction is 1,2-dihydroxy-5-(methylsulfanyl)pent-1-en-3-one + O2 = 4-methylsulfanyl-2-oxobutanoate + formate + 2 H(+). The protein operates within amino-acid biosynthesis; L-methionine biosynthesis via salvage pathway; L-methionine from S-methyl-5-thio-alpha-D-ribose 1-phosphate: step 5/6. In terms of biological role, catalyzes 2 different reactions between oxygen and the acireductone 1,2-dihydroxy-3-keto-5-methylthiopentene (DHK-MTPene) depending upon the metal bound in the active site. Fe-containing acireductone dioxygenase (Fe-ARD) produces formate and 2-keto-4-methylthiobutyrate (KMTB), the alpha-ketoacid precursor of methionine in the methionine recycle pathway. Ni-containing acireductone dioxygenase (Ni-ARD) produces methylthiopropionate, carbon monoxide and formate, and does not lie on the methionine recycle pathway. This is Acireductone dioxygenase from Xanthomonas euvesicatoria pv. vesicatoria (strain 85-10) (Xanthomonas campestris pv. vesicatoria).